Reading from the N-terminus, the 595-residue chain is NADPH-dependent diflavin oxidoreductase 1 (595 aa).

Residues 6–150 enclose the Flavodoxin-like domain; sequence VLVLYGSQTG…VIDPWLLSFW (145 aa). FMN-binding positions include 12-17, 59-62, 97-106, and Asp132; these read SQTGTA, ATTG, and LGDSSYPKFN. The region spanning 204-444 is the FAD-binding FR-type domain; sequence LRPFPAPLVF…WVKKGSLKFP (241 aa). Residues Arg348, 380 to 383, and 414 to 417 each bind FAD; these read RSFS and GLCS. Residues Thr458, 513–514, and 519–523 each bind NADP(+); these read SR and KVYVQ. An FAD-binding site is contributed by Trp594.

Belongs to the NADPH-dependent diflavin oxidoreductase NDOR1 family. The protein in the N-terminal section; belongs to the flavodoxin family. It in the C-terminal section; belongs to the flavoprotein pyridine nucleotide cytochrome reductase family. As to quaternary structure, interacts with ciapin1; as part of the cytosolic iron-sulfur (Fe-S) protein assembly (CIA) machinery. Requires FAD as cofactor. FMN is required as a cofactor.

It localises to the cytoplasm. The protein resides in the perinuclear region. The catalysed reaction is 2 oxidized [2Fe-2S]-[protein] + NADPH = 2 reduced [2Fe-2S]-[protein] + NADP(+) + H(+). Functionally, NADPH-dependent reductase which is a central component of the cytosolic iron-sulfur (Fe-S) protein assembly (CIA) machinery. Transfers electrons from NADPH via its FAD and FMN prosthetic groups to the [2Fe-2S] cluster of ciapin1, another key component of the CIA machinery. In turn, this reduced cluster provides electrons for assembly of cytosolic iron-sulfur cluster proteins. It can also reduce the [2Fe-2S] cluster of cisd1 and activate this protein implicated in Fe/S cluster repair. The chain is NADPH-dependent diflavin oxidoreductase 1 from Danio rerio (Zebrafish).